A 306-amino-acid polypeptide reads, in one-letter code: UDP-N-acetylenolpyruvoylglucosamine reductase (306 aa).

One can recognise an FAD-binding PCMH-type domain in the interval 29 to 193 (RVGGPADWLF…IRASLRGTPD (165 aa)). Residue arginine 173 is part of the active site. Catalysis depends on serine 222, which acts as the Proton donor. Residue glutamate 292 is part of the active site.

It belongs to the MurB family. It depends on FAD as a cofactor.

Its subcellular location is the cytoplasm. It catalyses the reaction UDP-N-acetyl-alpha-D-muramate + NADP(+) = UDP-N-acetyl-3-O-(1-carboxyvinyl)-alpha-D-glucosamine + NADPH + H(+). It participates in cell wall biogenesis; peptidoglycan biosynthesis. Its function is as follows. Cell wall formation. The sequence is that of UDP-N-acetylenolpyruvoylglucosamine reductase from Gluconobacter oxydans (strain 621H) (Gluconobacter suboxydans).